Consider the following 349-residue polypeptide: Ribosomal RNA small subunit methyltransferase H 1 (349 aa).

Residues 79–81 (GGH), aspartate 99, phenylalanine 129, aspartate 148, and glutamine 155 each bind S-adenosyl-L-methionine.

The protein belongs to the methyltransferase superfamily. RsmH family.

Its subcellular location is the cytoplasm. It carries out the reaction cytidine(1402) in 16S rRNA + S-adenosyl-L-methionine = N(4)-methylcytidine(1402) in 16S rRNA + S-adenosyl-L-homocysteine + H(+). Its function is as follows. Specifically methylates the N4 position of cytidine in position 1402 (C1402) of 16S rRNA. This Agathobacter rectalis (strain ATCC 33656 / DSM 3377 / JCM 17463 / KCTC 5835 / VPI 0990) (Eubacterium rectale) protein is Ribosomal RNA small subunit methyltransferase H 1.